The chain runs to 286 residues: Shikimate dehydrogenase (NADP(+)) (286 aa).

Shikimate is bound by residues 20–22 (SLS) and serine 67. Residue lysine 71 is the Proton acceptor of the active site. Residues asparagine 92 and aspartate 107 each contribute to the shikimate site. NADP(+) contacts are provided by residues 131–135 (GGGGA) and alanine 230. Tyrosine 232 is a shikimate binding site. Position 253 (glycine 253) interacts with NADP(+).

Belongs to the shikimate dehydrogenase family. In terms of assembly, homodimer.

It catalyses the reaction shikimate + NADP(+) = 3-dehydroshikimate + NADPH + H(+). The protein operates within metabolic intermediate biosynthesis; chorismate biosynthesis; chorismate from D-erythrose 4-phosphate and phosphoenolpyruvate: step 4/7. Functionally, involved in the biosynthesis of the chorismate, which leads to the biosynthesis of aromatic amino acids. Catalyzes the reversible NADPH linked reduction of 3-dehydroshikimate (DHSA) to yield shikimate (SA). In Lactococcus lactis subsp. cremoris (strain MG1363), this protein is Shikimate dehydrogenase (NADP(+)).